Reading from the N-terminus, the 236-residue chain is CD81 antigen (236 aa).

Topologically, residues 1–12 are cytoplasmic; that stretch reads MGVEGCTKCIKY. The helical transmembrane segment at 13–33 threads the bilayer; the sequence is LLFVFNFVFWLAGGVILGVAL. The Extracellular portion of the chain corresponds to 34 to 63; the sequence is WLRHDPQTTTLLYLELGDKPAPSTFYVGIY. Residues 64–84 form a helical membrane-spanning segment; sequence ILIAVGAVMMFVGFLGCYGAI. At 85-89 the chain is on the cytoplasmic side; it reads QESQC. A helical transmembrane segment spans residues 90–112; that stretch reads LLGTFFTCLVILFACEVAAGIWG. Topologically, residues 113 to 201 are extracellular; the sequence is FVNKDQIAKD…QKIDELFSGK (89 aa). 2 disulfide bridges follow: Cys-156–Cys-190 and Cys-157–Cys-175. Residues 202 to 224 traverse the membrane as a helical segment; it reads LYLIGIAAIVVAVIMIFEMILSM. Glu-219 serves as a coordination point for cholesterol. The Cytoplasmic segment spans residues 225–236; sequence VLCCGIRNSSVY.

This sequence belongs to the tetraspanin (TM4SF) family. Homodimer. Part of a complex composed of CD19, CR2/CD21, CD81 and IFITM1/CD225 in the membrane of mature B cells. Interacts (via the second extracellular domain) with CD19; this interaction is initiated early during biosynthesis in the ER and enables trafficking of only properly folded CD19. Part of a complex that includes MHC class II/HLA-DR molecules and IFITM1. Interacts with IFITM1. Interacts with IFITM2 and IFITM3. Part of integrin-tetraspanin complex composed of CD9, CD81, beta-1 and beta-2 integrins in the membrane of monocyte/macrophages. Interacts (via the second extracellular domain) with integrin ITGAV:ITGB3. Interacts with CD247/CD3 zeta, ICAM1 and CD9 at the immune synapse on T cell membrane. Part of a GPCR-tetraspanin complex consisting at least of ADGRG1, CD81, possibly CD9, and GNA11 in which CD81 enhances the association of ADGRG1 with GNA11. Part of a complex composed of CD9, CD81, PTGFRN and IGSF8. Interacts directly with IGSF8. Interacts with CD53 and SCIMP. Interacts with SAMHD1 (via its C-terminus). Interacts with glypican GPC3 and with the transcriptional repressor HHEX; binding to GPC3 decreases the availability of free CD81 for binding to HHEX, resulting in nuclear translocation of HHEX and transcriptional repression. Interacts with CLDN1. Interacts with CLDN6 and CLDN9. Not glycosylated. In terms of processing, likely constitutively palmitoylated at low levels. Protein palmitoylation is up-regulated upon coligation of BCR and CD9-C2R-CD81 complexes in lipid rafts.

The protein localises to the cell membrane. Its subcellular location is the basolateral cell membrane. Functionally, structural component of specialized membrane microdomains known as tetraspanin-enriched microdomains (TERMs), which act as platforms for receptor clustering and signaling. Essential for trafficking and compartmentalization of CD19 receptor on the surface of activated B cells. Upon initial encounter with microbial pathogens, enables the assembly of CD19-CR2/CD21 and B cell receptor (BCR) complexes at signaling TERMs, lowering the threshold dose of antigen required to trigger B cell clonal expansion and antibody production. In T cells, facilitates the localization of CD247/CD3 zeta at antigen-induced synapses with B cells, providing for costimulation and polarization toward T helper type 2 phenotype. Present in MHC class II compartments, may also play a role in antigen presentation. Can act both as positive and negative regulator of homotypic or heterotypic cell-cell fusion processes. Positively regulates sperm-egg fusion and may be involved in acrosome reaction. In myoblasts, associates with CD9 and PTGFRN and inhibits myotube fusion during muscle regeneration. In macrophages, associates with CD9 and beta-1 and beta-2 integrins, and prevents macrophage fusion into multinucleated giant cells specialized in ingesting complement-opsonized large particles. Also prevents the fusion of mononuclear cell progenitors into osteoclasts in charge of bone resorption. May regulate the compartmentalization of enzymatic activities. In T cells, defines the subcellular localization of dNTPase SAMHD1 and permits its degradation by the proteasome, thereby controlling intracellular dNTP levels. Also involved in cell adhesion and motility. Positively regulates integrin-mediated adhesion of macrophages, particularly relevant for the inflammatory response in the lung. The chain is CD81 antigen (Cd81) from Rattus norvegicus (Rat).